We begin with the raw amino-acid sequence, 243 residues long: Ion-translocating oxidoreductase complex subunit E (243 aa).

6 helical membrane-spanning segments follow: residues 40–60 (LGMG…ISAL), 72–92 (AFIL…NAWL), 94–114 (DLHK…AILG), 129–149 (ALDG…VGAI), 152–172 (ILGS…HFAF), and 183–203 (GFLI…LFAL).

This sequence belongs to the NqrDE/RnfAE family. As to quaternary structure, the complex is composed of six subunits: RnfA, RnfB, RnfC, RnfD, RnfE and RnfG.

It localises to the cellular chromatophore membrane. In terms of biological role, part of a membrane-bound complex that couples electron transfer with translocation of ions across the membrane. Required for nitrogen fixation. Involved in electron transfer to nitrogenase. This is Ion-translocating oxidoreductase complex subunit E from Rhodobacter capsulatus (Rhodopseudomonas capsulata).